Reading from the N-terminus, the 287-residue chain is MSRPEHIAPPEIFYDDVESKKYSSNSRIIEIQTKMAERAYELLAIPETAEGLMLLDIGCGSGISGDVITDAGHYWIGCDISQHMLDVAIDREVEGDVMLRDIGQGFPFRAGSFDAAISISAIQWLCNAEKSHHNPRKRLHTFFQSLFNVLTRGGKAILQFYPENSAQIEMITASALRCGFSGGLLIDFPNSSKAKKYFLVLFTGNNNIMPSAKGVEGEEYEQQEEEDSNEVKYSNRKRDRRRVTKSKGSAQHKTKEWIMNKKDRQRKQGREIKNDSKFSGRKRGPKF.

The interval 214 to 287 (GVEGEEYEQQ…FSGRKRGPKF (74 aa)) is disordered. The segment covering 217–228 (GEEYEQQEEEDS) has biased composition (acidic residues). The span at 234-245 (SNRKRDRRRVTK) shows a compositional bias: basic residues. The span at 253–278 (KTKEWIMNKKDRQRKQGREIKNDSKF) shows a compositional bias: basic and acidic residues.

It belongs to the class I-like SAM-binding methyltransferase superfamily. BUD23/WBSCR22 family.

The protein resides in the nucleus. It localises to the nucleoplasm. It is found in the cytoplasm. Its subcellular location is the perinuclear region. The catalysed reaction is a guanosine in 18S rRNA + S-adenosyl-L-methionine = an N(7)-methylguanosine in 18S rRNA + S-adenosyl-L-homocysteine. In terms of biological role, S-adenosyl-L-methionine-dependent methyltransferase that specifically methylates the N(7) position of a guanine in 18S rRNA. Important for biogenesis end export of the 40S ribosomal subunit independent on its methyltransferase activity. Functionally, S-adenosyl-L-methionine-dependent methyltransferase that specifically methylates the N(7) position of a guanine in 18S rRNA. Requires the methyltransferase adapter protein TRM112 for full rRNA methyltransferase activity. Involved in the pre-rRNA processing steps leading to small-subunit rRNA production independently of its RNA-modifying catalytic activity. Important for biogenesis end export of the 40S ribosomal subunit independent on its methyltransferase activity. The polypeptide is Probable 18S rRNA (guanine-N(7))-methyltransferase (Dictyostelium discoideum (Social amoeba)).